We begin with the raw amino-acid sequence, 119 residues long: Large ribosomal subunit protein bL20 (119 aa).

Belongs to the bacterial ribosomal protein bL20 family.

Functionally, binds directly to 23S ribosomal RNA and is necessary for the in vitro assembly process of the 50S ribosomal subunit. It is not involved in the protein synthesizing functions of that subunit. This Rhodopseudomonas palustris (strain ATCC BAA-98 / CGA009) protein is Large ribosomal subunit protein bL20.